The following is a 369-amino-acid chain: tRNA/tmRNA (uracil-C(5))-methyltransferase (369 aa).

Residues Gln-190, Tyr-218, Asn-223, Glu-239, and Asp-301 each contribute to the S-adenosyl-L-methionine site. Cys-326 serves as the catalytic Nucleophile. Glu-360 acts as the Proton acceptor in catalysis.

The protein belongs to the class I-like SAM-binding methyltransferase superfamily. RNA M5U methyltransferase family. TrmA subfamily.

It carries out the reaction uridine(54) in tRNA + S-adenosyl-L-methionine = 5-methyluridine(54) in tRNA + S-adenosyl-L-homocysteine + H(+). The catalysed reaction is uridine(341) in tmRNA + S-adenosyl-L-methionine = 5-methyluridine(341) in tmRNA + S-adenosyl-L-homocysteine + H(+). Its function is as follows. Dual-specificity methyltransferase that catalyzes the formation of 5-methyluridine at position 54 (m5U54) in all tRNAs, and that of position 341 (m5U341) in tmRNA (transfer-mRNA). The chain is tRNA/tmRNA (uracil-C(5))-methyltransferase from Vibrio vulnificus (strain YJ016).